A 353-amino-acid chain; its full sequence is Photosystem II D2 protein (353 aa).

Position 2 is an N-acetylthreonine (T2). T2 carries the phosphothreonine modification. The helical transmembrane segment at 41-61 (CAYFAVGGWFTGTTFVTSWYT) threads the bilayer. Chlorophyll a is bound at residue H118. A helical transmembrane segment spans residues 125-141 (GFMLRQFELARSVQLRP). Pheophytin a contacts are provided by Q130 and N143. A helical transmembrane segment spans residues 153-166 (VFVSVFLIYPLGQS). H198 contributes to the chlorophyll a binding site. A helical transmembrane segment spans residues 208–228 (AALLCAIHGATVENTLFEDGD). Residues H215 and F262 each contribute to the a plastoquinone site. H215 contacts Fe cation. H269 contributes to the Fe cation binding site. Residues 279-295 (GLWMSALGVVGLALNLR) traverse the membrane as a helical segment.

This sequence belongs to the reaction center PufL/M/PsbA/D family. In terms of assembly, PSII is composed of 1 copy each of membrane proteins PsbA, PsbB, PsbC, PsbD, PsbE, PsbF, PsbH, PsbI, PsbJ, PsbK, PsbL, PsbM, PsbT, PsbX, PsbY, PsbZ, Psb30/Ycf12, at least 3 peripheral proteins of the oxygen-evolving complex and a large number of cofactors. It forms dimeric complexes. The D1/D2 heterodimer binds P680, chlorophylls that are the primary electron donor of PSII, and subsequent electron acceptors. It shares a non-heme iron and each subunit binds pheophytin, quinone, additional chlorophylls, carotenoids and lipids. There is also a Cl(-1) ion associated with D1 and D2, which is required for oxygen evolution. The PSII complex binds additional chlorophylls, carotenoids and specific lipids. serves as cofactor.

Its subcellular location is the plastid. It localises to the chloroplast thylakoid membrane. The enzyme catalyses 2 a plastoquinone + 4 hnu + 2 H2O = 2 a plastoquinol + O2. Functionally, photosystem II (PSII) is a light-driven water:plastoquinone oxidoreductase that uses light energy to abstract electrons from H(2)O, generating O(2) and a proton gradient subsequently used for ATP formation. It consists of a core antenna complex that captures photons, and an electron transfer chain that converts photonic excitation into a charge separation. The D1/D2 (PsbA/PsbD) reaction center heterodimer binds P680, the primary electron donor of PSII as well as several subsequent electron acceptors. D2 is needed for assembly of a stable PSII complex. In Cicer arietinum (Chickpea), this protein is Photosystem II D2 protein.